A 258-amino-acid polypeptide reads, in one-letter code: uncharacterized protein (258 aa).

Polar residues predominate over residues 40–54 (AQKTDTPLDSSSYAV). The interval 40–63 (AQKTDTPLDSSSYAVTSPEEAPNE) is disordered.

This is an uncharacterized protein from Treponema pallidum (strain Nichols).